A 164-amino-acid polypeptide reads, in one-letter code: SsrA-binding protein (164 aa).

This sequence belongs to the SmpB family.

The protein resides in the cytoplasm. Its function is as follows. Required for rescue of stalled ribosomes mediated by trans-translation. Binds to transfer-messenger RNA (tmRNA), required for stable association of tmRNA with ribosomes. tmRNA and SmpB together mimic tRNA shape, replacing the anticodon stem-loop with SmpB. tmRNA is encoded by the ssrA gene; the 2 termini fold to resemble tRNA(Ala) and it encodes a 'tag peptide', a short internal open reading frame. During trans-translation Ala-aminoacylated tmRNA acts like a tRNA, entering the A-site of stalled ribosomes, displacing the stalled mRNA. The ribosome then switches to translate the ORF on the tmRNA; the nascent peptide is terminated with the 'tag peptide' encoded by the tmRNA and targeted for degradation. The ribosome is freed to recommence translation, which seems to be the essential function of trans-translation. The chain is SsrA-binding protein from Corynebacterium glutamicum (strain R).